Here is a 298-residue protein sequence, read N- to C-terminus: GTPase Era (298 aa).

Residues 8–176 (RSGSVAVIGR…VSDLLKLVPE (169 aa)) form the Era-type G domain. Positions 16–23 (GRPNVGKS) are G1. GTP is bound at residue 16-23 (GRPNVGKS). The interval 42 to 46 (QTTRH) is G2. A G3 region spans residues 63 to 66 (DTPG). Residues 63 to 67 (DTPGL) and 125 to 128 (NKVD) each bind GTP. Residues 125 to 128 (NKVD) form a G4 region. Residues 155–157 (VSA) form a G5 region. Residues 199–283 (VREQLMRQLG…FLETWVRVRE (85 aa)) form the KH type-2 domain.

It belongs to the TRAFAC class TrmE-Era-EngA-EngB-Septin-like GTPase superfamily. Era GTPase family. As to quaternary structure, monomer.

It localises to the cytoplasm. Its subcellular location is the cell inner membrane. In terms of biological role, an essential GTPase that binds both GDP and GTP, with rapid nucleotide exchange. Plays a role in 16S rRNA processing and 30S ribosomal subunit biogenesis and possibly also in cell cycle regulation and energy metabolism. The sequence is that of GTPase Era from Xanthomonas campestris pv. campestris (strain 8004).